Reading from the N-terminus, the 182-residue chain is Ribosome-recycling factor (182 aa).

This sequence belongs to the RRF family.

The protein localises to the cytoplasm. Responsible for the release of ribosomes from messenger RNA at the termination of protein biosynthesis. May increase the efficiency of translation by recycling ribosomes from one round of translation to another. The protein is Ribosome-recycling factor of Prochlorococcus marinus (strain SARG / CCMP1375 / SS120).